Consider the following 423-residue polypeptide: Glutamate-1-semialdehyde 2,1-aminomutase (423 aa).

Residue Lys-259 is modified to N6-(pyridoxal phosphate)lysine.

The protein belongs to the class-III pyridoxal-phosphate-dependent aminotransferase family. HemL subfamily. As to quaternary structure, homodimer. It depends on pyridoxal 5'-phosphate as a cofactor.

It is found in the cytoplasm. It catalyses the reaction (S)-4-amino-5-oxopentanoate = 5-aminolevulinate. It participates in porphyrin-containing compound metabolism; protoporphyrin-IX biosynthesis; 5-aminolevulinate from L-glutamyl-tRNA(Glu): step 2/2. This chain is Glutamate-1-semialdehyde 2,1-aminomutase, found in Thermosipho melanesiensis (strain DSM 12029 / CIP 104789 / BI429).